The following is a 255-amino-acid chain: Triosephosphate isomerase (255 aa).

9 to 11 (NWK) lines the substrate pocket. The active-site Electrophile is the H95. The Proton acceptor role is filled by E167. Residues G173, S212, and 233-234 (GG) each bind substrate.

Belongs to the triosephosphate isomerase family. In terms of assembly, homodimer.

Its subcellular location is the cytoplasm. The catalysed reaction is D-glyceraldehyde 3-phosphate = dihydroxyacetone phosphate. It functions in the pathway carbohydrate biosynthesis; gluconeogenesis. Its pathway is carbohydrate degradation; glycolysis; D-glyceraldehyde 3-phosphate from glycerone phosphate: step 1/1. In terms of biological role, involved in the gluconeogenesis. Catalyzes stereospecifically the conversion of dihydroxyacetone phosphate (DHAP) to D-glyceraldehyde-3-phosphate (G3P). This Sodalis glossinidius (strain morsitans) protein is Triosephosphate isomerase.